Here is a 227-residue protein sequence, read N- to C-terminus: uncharacterized protein (227 aa).

Residues 1 to 22 form the signal peptide; it reads MDSVMRKSLFLLLPLVVTNAHA.

This is an uncharacterized protein from Salmonella typhi.